The chain runs to 614 residues: Sodium- and chloride-dependent betaine transporter (614 aa).

Over 1–44 the chain is Cytoplasmic; that stretch reads MDRKVTVHEDGCPVVSWVPEEGEMMDQKDKDQVKDRGQWTNKME. The next 3 helical transmembrane spans lie at 45–65, 73–92, and 117–137; these read FVLS…FPYL, AFFI…VFFL, and GIGM…IIIL. Topologically, residues 138-210 are extracellular; it reads AWALFYLFSS…SGIHDLGSLR (73 aa). Residues N171 and N183 are each glycosylated (N-linked (GlcNAc...) asparagine). A run of 9 helical transmembrane segments spans residues 211 to 229, 238 to 255, 291 to 308, 320 to 341, 374 to 393, 423 to 441, 458 to 478, 499 to 518, and 538 to 556; these read WELA…FCIW, VVYF…ILLI, IFFS…LGSY, IALC…FSIL, MPLS…FLGL, LLIL…LLVT, GICL…VYGA, ISWL…FSLS, and IGWL…FIII. The Cytoplasmic segment spans residues 557 to 614; it reads TLLKTQGSFKKRLQRLITPDPSLPQPGRRSPQDGSSAQNCSTSPVKQELIAWEKETHL. The segment at 574-600 is disordered; the sequence is TPDPSLPQPGRRSPQDGSSAQNCSTSP. S586 carries the phosphoserine modification. The span at 588–600 shows a compositional bias: polar residues; the sequence is QDGSSAQNCSTSP.

It belongs to the sodium:neurotransmitter symporter (SNF) (TC 2.A.22) family. SLC6A12 subfamily. Interacts with LIN7C.

The protein resides in the basolateral cell membrane. The protein localises to the cell membrane. It carries out the reaction 4-aminobutanoate(out) + chloride(out) + 3 Na(+)(out) = 4-aminobutanoate(in) + chloride(in) + 3 Na(+)(in). The catalysed reaction is glycine betaine(out) + 2 chloride(out) + 3 Na(+)(out) = glycine betaine(in) + 2 chloride(in) + 3 Na(+)(in). Its function is as follows. Transporter that mediates cellular uptake of betaine and GABA in a sodium- and chloride-dependent process. May have a role in regulation of GABAergic transmission in the brain through the reuptake of GABA into presynaptic terminals, as well as in osmotic regulation. Probably also involved in renal and hepatic osmotic regulation. The protein is Sodium- and chloride-dependent betaine transporter (Slc6a12) of Rattus norvegicus (Rat).